Consider the following 1435-residue polypeptide: MGARASVLSGGKLDSWEKIRLRPGGRKKYKLKHIVWASRELGRFALNRDLLETAEGCVQIMKQLQPALTGTEELRSLFNTVATLYCVHQKIEVKDTKEAPEEVEKIQKNSQQEIQQAAKNEGNSNPVSQNYPIVQNAQGQMIHQAISPWTLNAWVKVVEEKAFSPEVIPMFSALSEGATPQDLNTMLNTVGGHQAAMQMLKDTINDEAAEWDRIHPQQAGPIPPGQIREPSGSDIAGTTSTLQEQIRWMTSNPPIPVGEIYKRWIILGLNKIVRMYSPVSILDIRQGPKEPFRDYVDRFFKTLRAEQATQEVKGWMTDTLLVQNANPDCKTILRALGPGATLEEMMTACQGVGGPSHKARVLAEAMSQASGAAAAAIMMQKSNFKGPRRIIKCFNCGKEGHLARNCRAPRKKGCWKCGKEGHQMKECTERQANFLRENLAFQQGEARKLSPEQDRANSPTSRELRIRRGDSPLPEAGAKGEGAISLNFPQITLWQRPLVTVKIGGQLIEALLDTGADDTVLEGINLPGKWKPKMIGGIGGFIKVRQYDQILIEIGGKKAIGTVLVGPTPINIIGRNMLTQIGCTLNFPISPIETVPVKLKPGMDGPRVKQWPLTEEKIKALTEICKDMEKEGKISKIGPENPYNTPIFAIKKKDSTKWRKLVDFRELNKRTQDFWEVQLGIPHPAGLKKKRSVTVLDVGDAYFSVPLDKDFRKYTAFTIPSINNETPGIRYQYNVLPQGWKGSPAIFQSSMTKILEPSRTKNPEMVIYQYMDDLYVGSDLEIGQHRAKIEELREHLLKWGLTTPDKKHQKEPPFLWMGYELHPDKWTVQPIQLPEKEDWTVNDIQKLVGKLNWASQIYPGIKVKHLCRLLRGAKALTDIVPLTAEAEMELAENREILKEPVHGVYHDPSKELIAEVQKQGPDQWTYQIYQEPYKNLKTGKYAKRGSAHTNDVKQLTEVVQKIATEGIVIWGKIPKFKLPIRKETWEVWWTEYWQAAWIPEWEFVNTPPLVKLWYQLETEPIPGAETYYVDGAANRETKLGKAGHVTDKGKQKIITLTETTNQKAELHAIQLALQDSRPEVNIVTDSQYALGIIQAQPDRSGSELVNQIIEQLIKKEKVYLSWVPAHKGIGGNEQVDKLVSSGIRKVLFLDGIDKAQEEHERYHSNWRAMASDFNLPPVVAKEIVASCDKCQLKGEAMHGQVDCSPGIWQLDCTHLEGKIIIVAVHVASGYIEAEVIPAETGQETAYFILKLAGRWPVKVIHTDNGPNFISAAVKAACWWANITQEFGIPYNPQSQGVVESMNKELKKIIGQVGDQAEHLKTAVQMAVFIHNFKRKGGIGGYSAGERIIDIIASDIQTKELQKQIIKIQNFRVYYRDSRDPIWKGPAKLLWKGEGAVVIQDNNEIKVVPRRKAKILKDYGKQMAGGDCVAGRQDED.

A lipid anchor (N-myristoyl glycine; by host) is attached at glycine 2. Positions 7–31 (VLSGGKLDSWEKIRLRPGGRKKYKL) are interaction with Gp41. The interaction with host CALM1 stretch occupies residues 8-43 (LSGGKLDSWEKIRLRPGGRKKYKLKHIVWASRELGR). Residues 12–19 (KLDSWEKI) are interaction with host AP3D1. Positions 14–33 (DSWEKIRLRPGGRKKYKLKH) are interaction with membrane phosphatidylinositol 4,5-bisphosphate and RNA. The Nuclear export signal signature appears at 16-22 (WEKIRLR). The short motif at 26 to 32 (RKKYKLK) is the Nuclear localization signal element. Positions 72–76 (EELRS) are interaction with membrane phosphatidylinositol 4,5-bisphosphate. The disordered stretch occupies residues 107 to 126 (QKNSQQEIQQAAKNEGNSNP). Residues 108–126 (KNSQQEIQQAAKNEGNSNP) are compositionally biased toward polar residues. Tyrosine 131 carries the post-translational modification Phosphotyrosine; by host. Positions 188 to 226 (NTVGGHQAAMQMLKDTINDEAAEWDRIHPQQAGPIPPGQ) are interaction with human PPIA/CYPA and NUP153. The segment at 276–362 (YSPVSILDIR…GGPSHKARVL (87 aa)) is dimerization/Multimerization of capsid protein p24. CCHC-type zinc fingers lie at residues 391–408 (IKCF…NCRA) and 412–429 (KGCW…ECTE). The tract at residues 444–478 (GEARKLSPEQDRANSPTSRELRIRRGDSPLPEAGA) is disordered. Over residues 445-455 (EARKLSPEQDR) the composition is skewed to basic and acidic residues. The segment at 489-493 (PQITL) is dimerization of protease. A Peptidase A2 domain is found at 508–577 (IEALLDTGAD…TPINIIGRNM (70 aa)). The For protease activity; shared with dimeric partner role is filled by aspartate 513. Dimerization of protease regions lie at residues 537 to 543 (GIGGFIK) and 576 to 588 (NMLT…LNFP). Positions 631–821 (EGKISKIGPE…PPFLWMGYEL (191 aa)) constitute a Reverse transcriptase domain. Residues aspartate 697, aspartate 772, and aspartate 773 each coordinate Mg(2+). The interval 814–822 (FLWMGYELH) is RT 'primer grip'. Positions 985–1001 (WEVWWTEYWQAAWIPEW) match the Tryptophan repeat motif motif. The RNase H type-1 domain occupies 1021-1144 (IPGAETYYVD…VDKLVSSGIR (124 aa)). Residues aspartate 1030, glutamate 1065, aspartate 1085, and aspartate 1136 each contribute to the Mg(2+) site. The segment at 1150–1191 (DGIDKAQEEHERYHSNWRAMASDFNLPPVVAKEIVASCDKCQ) adopts an Integrase-type zinc-finger fold. The Zn(2+) site is built by histidine 1159, histidine 1163, cysteine 1187, and cysteine 1190. Residues 1201-1351 (VDCSPGIWQL…SAGERIIDII (151 aa)) form the Integrase catalytic domain. Mg(2+) is bound by residues aspartate 1211, aspartate 1263, and glutamate 1299. A DNA-binding region (integrase-type) is located at residues 1370 to 1417 (FRVYYRDSRDPIWKGPAKLLWKGEGAVVIQDNNEIKVVPRRKAKILKD).

As to quaternary structure, homotrimer; further assembles as hexamers of trimers. Interacts with gp41 (via C-terminus). Interacts with host CALM1; this interaction induces a conformational change in the Matrix protein, triggering exposure of the myristate group. Interacts with host AP3D1; this interaction allows the polyprotein trafficking to multivesicular bodies during virus assembly. Part of the pre-integration complex (PIC) which is composed of viral genome, matrix protein, Vpr and integrase. Homodimer; the homodimer further multimerizes as homohexamers or homopentamers. Interacts with human PPIA/CYPA; This interaction stabilizes the capsid. Interacts with human NUP153. Interacts with host PDZD8; this interaction stabilizes the capsid. Interacts with monkey TRIM5; this interaction destabilizes the capsid. In terms of assembly, homodimer, whose active site consists of two apposed aspartic acid residues. As to quaternary structure, heterodimer of p66 RT and p51 RT (RT p66/p51). Heterodimerization of RT is essential for DNA polymerase activity. The overall folding of the subdomains is similar in p66 RT and p51 RT but the spatial arrangements of the subdomains are dramatically different. Homotetramer; may further associate as a homohexadecamer. Part of the pre-integration complex (PIC) which is composed of viral genome, matrix protein, Vpr and integrase. Interacts with human SMARCB1/INI1 and human PSIP1/LEDGF isoform 1. Interacts with human KPNA3; this interaction might play a role in nuclear import of the pre-integration complex. Interacts with human NUP153; this interaction might play a role in nuclear import of the pre-integration complex. Mg(2+) serves as cofactor. In terms of processing, specific enzymatic cleavages by the viral protease yield mature proteins. The protease is released by autocatalytic cleavage. The polyprotein is cleaved during and after budding, this process is termed maturation. Proteolytic cleavage of p66 RT removes the RNase H domain to yield the p51 RT subunit. Nucleocapsid protein p7 might be further cleaved after virus entry. Tyrosine phosphorylated presumably in the virion by a host kinase. Phosphorylation is apparently not a major regulator of membrane association. Post-translationally, phosphorylated possibly by host MAPK1; this phosphorylation is necessary for Pin1-mediated virion uncoating. In terms of processing, methylated by host PRMT6, impairing its function by reducing RNA annealing and the initiation of reverse transcription.

The protein localises to the host cell membrane. The protein resides in the host endosome. It is found in the host multivesicular body. Its subcellular location is the virion membrane. It localises to the host nucleus. The protein localises to the host cytoplasm. The protein resides in the virion. It catalyses the reaction Specific for a P1 residue that is hydrophobic, and P1' variable, but often Pro.. The catalysed reaction is Endohydrolysis of RNA in RNA/DNA hybrids. Three different cleavage modes: 1. sequence-specific internal cleavage of RNA. Human immunodeficiency virus type 1 and Moloney murine leukemia virus enzymes prefer to cleave the RNA strand one nucleotide away from the RNA-DNA junction. 2. RNA 5'-end directed cleavage 13-19 nucleotides from the RNA end. 3. DNA 3'-end directed cleavage 15-20 nucleotides away from the primer terminus.. It carries out the reaction 3'-end directed exonucleolytic cleavage of viral RNA-DNA hybrid.. The enzyme catalyses DNA(n) + a 2'-deoxyribonucleoside 5'-triphosphate = DNA(n+1) + diphosphate. With respect to regulation, protease: The viral protease is inhibited by many synthetic protease inhibitors (PIs), such as amprenavir, atazanavir, indinavir, loprinavir, nelfinavir, ritonavir and saquinavir. Use of protease inhibitors in tritherapy regimens permit more ambitious therapeutic strategies. Reverse transcriptase/ribonuclease H: RT can be inhibited either by nucleoside RT inhibitors (NRTIs) or by non nucleoside RT inhibitors (NNRTIs). NRTIs act as chain terminators, whereas NNRTIs inhibit DNA polymerization by binding a small hydrophobic pocket near the RT active site and inducing an allosteric change in this region. Classical NRTIs are abacavir, adefovir (PMEA), didanosine (ddI), lamivudine (3TC), stavudine (d4T), tenofovir (PMPA), zalcitabine (ddC), and zidovudine (AZT). Classical NNRTIs are atevirdine (BHAP U-87201E), delavirdine, efavirenz (DMP-266), emivirine (I-EBU), and nevirapine (BI-RG-587). The tritherapies used as a basic effective treatment of AIDS associate two NRTIs and one NNRTI. Its function is as follows. Mediates, with Gag polyprotein, the essential events in virion assembly, including binding the plasma membrane, making the protein-protein interactions necessary to create spherical particles, recruiting the viral Env proteins, and packaging the genomic RNA via direct interactions with the RNA packaging sequence (Psi). Gag-Pol polyprotein may regulate its own translation, by the binding genomic RNA in the 5'-UTR. At low concentration, the polyprotein would promote translation, whereas at high concentration, the polyprotein would encapsidate genomic RNA and then shut off translation. In terms of biological role, targets the polyprotein to the plasma membrane via a multipartite membrane-binding signal, that includes its myristoylated N-terminus. Matrix protein is part of the pre-integration complex. Implicated in the release from host cell mediated by Vpu. Binds to RNA. Functionally, forms the conical core that encapsulates the genomic RNA-nucleocapsid complex in the virion. Most core are conical, with only 7% tubular. The core is constituted by capsid protein hexamer subunits. The core is disassembled soon after virion entry. Host restriction factors such as TRIM5-alpha or TRIMCyp bind retroviral capsids and cause premature capsid disassembly, leading to blocks in reverse transcription. Capsid restriction by TRIM5 is one of the factors which restricts HIV-1 to the human species. Host PIN1 apparently facilitates the virion uncoating. On the other hand, interactions with PDZD8 or CYPA stabilize the capsid. Encapsulates and protects viral dimeric unspliced genomic RNA (gRNA). Binds these RNAs through its zinc fingers. Acts as a nucleic acid chaperone which is involved in rearangement of nucleic acid secondary structure during gRNA retrotranscription. Also facilitates template switch leading to recombination. As part of the polyprotein, participates in gRNA dimerization, packaging, tRNA incorporation and virion assembly. Its function is as follows. Aspartyl protease that mediates proteolytic cleavages of Gag and Gag-Pol polyproteins during or shortly after the release of the virion from the plasma membrane. Cleavages take place as an ordered, step-wise cascade to yield mature proteins. This process is called maturation. Displays maximal activity during the budding process just prior to particle release from the cell. Also cleaves Nef and Vif, probably concomitantly with viral structural proteins on maturation of virus particles. Hydrolyzes host EIF4GI and PABP1 in order to shut off the capped cellular mRNA translation. The resulting inhibition of cellular protein synthesis serves to ensure maximal viral gene expression and to evade host immune response. Also mediates cleavage of host YTHDF3. Mediates cleavage of host CARD8, thereby activating the CARD8 inflammasome, leading to the clearance of latent HIV-1 in patient CD4(+) T-cells after viral reactivation; in contrast, HIV-1 can evade CARD8-sensing when its protease remains inactive in infected cells prior to viral budding. In terms of biological role, multifunctional enzyme that converts the viral RNA genome into dsDNA in the cytoplasm, shortly after virus entry into the cell. This enzyme displays a DNA polymerase activity that can copy either DNA or RNA templates, and a ribonuclease H (RNase H) activity that cleaves the RNA strand of RNA-DNA heteroduplexes in a partially processive 3' to 5' endonucleasic mode. Conversion of viral genomic RNA into dsDNA requires many steps. A tRNA(3)-Lys binds to the primer-binding site (PBS) situated at the 5'-end of the viral RNA. RT uses the 3' end of the tRNA primer to perform a short round of RNA-dependent minus-strand DNA synthesis. The reading proceeds through the U5 region and ends after the repeated (R) region which is present at both ends of viral RNA. The portion of the RNA-DNA heteroduplex is digested by the RNase H, resulting in a ssDNA product attached to the tRNA primer. This ssDNA/tRNA hybridizes with the identical R region situated at the 3' end of viral RNA. This template exchange, known as minus-strand DNA strong stop transfer, can be either intra- or intermolecular. RT uses the 3' end of this newly synthesized short ssDNA to perform the RNA-dependent minus-strand DNA synthesis of the whole template. RNase H digests the RNA template except for two polypurine tracts (PPTs) situated at the 5'-end and near the center of the genome. It is not clear if both polymerase and RNase H activities are simultaneous. RNase H probably can proceed both in a polymerase-dependent (RNA cut into small fragments by the same RT performing DNA synthesis) and a polymerase-independent mode (cleavage of remaining RNA fragments by free RTs). Secondly, RT performs DNA-directed plus-strand DNA synthesis using the PPTs that have not been removed by RNase H as primers. PPTs and tRNA primers are then removed by RNase H. The 3' and 5' ssDNA PBS regions hybridize to form a circular dsDNA intermediate. Strand displacement synthesis by RT to the PBS and PPT ends produces a blunt ended, linear dsDNA copy of the viral genome that includes long terminal repeats (LTRs) at both ends. Functionally, catalyzes viral DNA integration into the host chromosome, by performing a series of DNA cutting and joining reactions. This enzyme activity takes place after virion entry into a cell and reverse transcription of the RNA genome in dsDNA. The first step in the integration process is 3' processing. This step requires a complex comprising the viral genome, matrix protein, Vpr and integrase. This complex is called the pre-integration complex (PIC). The integrase protein removes 2 nucleotides from each 3' end of the viral DNA, leaving recessed CA OH's at the 3' ends. In the second step, the PIC enters cell nucleus. This process is mediated through integrase and Vpr proteins, and allows the virus to infect a non dividing cell. This ability to enter the nucleus is specific of lentiviruses, other retroviruses cannot and rely on cell division to access cell chromosomes. In the third step, termed strand transfer, the integrase protein joins the previously processed 3' ends to the 5' ends of strands of target cellular DNA at the site of integration. The 5'-ends are produced by integrase-catalyzed staggered cuts, 5 bp apart. A Y-shaped, gapped, recombination intermediate results, with the 5'-ends of the viral DNA strands and the 3' ends of target DNA strands remaining unjoined, flanking a gap of 5 bp. The last step is viral DNA integration into host chromosome. This involves host DNA repair synthesis in which the 5 bp gaps between the unjoined strands are filled in and then ligated. Since this process occurs at both cuts flanking the HIV genome, a 5 bp duplication of host DNA is produced at the ends of HIV-1 integration. Alternatively, Integrase may catalyze the excision of viral DNA just after strand transfer, this is termed disintegration. The sequence is that of Gag-Pol polyprotein (gag-pol) from Human immunodeficiency virus type 1 group M subtype G (isolate 92NG083) (HIV-1).